The chain runs to 120 residues: Small ribosomal subunit protein uS13 (120 aa).

A disordered region spans residues 93–120 (RRGLPCRGQKTKTNARTRKGKRKTVGAA).

This sequence belongs to the universal ribosomal protein uS13 family. Part of the 30S ribosomal subunit. Forms a loose heterodimer with protein S19. Forms two bridges to the 50S subunit in the 70S ribosome.

Functionally, located at the top of the head of the 30S subunit, it contacts several helices of the 16S rRNA. In the 70S ribosome it contacts the 23S rRNA (bridge B1a) and protein L5 of the 50S subunit (bridge B1b), connecting the 2 subunits; these bridges are implicated in subunit movement. Contacts the tRNAs in the A and P-sites. This Sulfurovum sp. (strain NBC37-1) protein is Small ribosomal subunit protein uS13.